Here is a 277-residue protein sequence, read N- to C-terminus: Radial spoke head protein 9 homolog (277 aa).

Belongs to the flagellar radial spoke RSP9 family. As to quaternary structure, component of axonemal radial spoke complexes.

Its subcellular location is the cytoplasm. The protein resides in the cytoskeleton. It is found in the cilium axoneme. It localises to the flagellum axoneme. The protein localises to the cell projection. Its subcellular location is the kinocilium. Functionally, functions as part of axonemal radial spoke complexes that play an important part in the motility of sperm and cilia. Required for motility of olfactory and neural cilia and for the structural integrity of ciliary axonemes in both 9+0 and 9+2 motile cilia. Essential for both the radial spoke head assembly and the central pair microtubule stability in ependymal motile cilia. This chain is Radial spoke head protein 9 homolog (rsph9), found in Danio rerio (Zebrafish).